The sequence spans 216 residues: Peroxiredoxin (216 aa).

The Thioredoxin domain occupies 2-158; the sequence is IVIGEKFPEV…ILRLVKALKI (157 aa). Cysteine 46 (cysteine sulfenic acid (-SOH) intermediate) is an active-site residue. Position 121 (arginine 121) interacts with substrate. Residues cysteine 205 and cysteine 211 are joined by a disulfide bond.

The protein belongs to the peroxiredoxin family. Prx6 subfamily. As to quaternary structure, homodecamer. Pentamer of dimers that assemble into a ring structure.

Its subcellular location is the cytoplasm. It catalyses the reaction a hydroperoxide + [thioredoxin]-dithiol = an alcohol + [thioredoxin]-disulfide + H2O. In terms of biological role, thiol-specific peroxidase that catalyzes the reduction of hydrogen peroxide and organic hydroperoxides to water and alcohols, respectively. Plays a role in cell protection against oxidative stress by detoxifying peroxides. This is Peroxiredoxin from Pyrococcus furiosus (strain ATCC 43587 / DSM 3638 / JCM 8422 / Vc1).